We begin with the raw amino-acid sequence, 406 residues long: ATP synthase subunit a (406 aa).

Low complexity-rich tracts occupy residues alanine 22 to glutamate 31 and aspartate 43 to glycine 59. Residues alanine 22–alanine 76 are disordered. 6 consecutive transmembrane segments (helical) span residues lysine 151–valine 171, phenylalanine 209–valine 229, alanine 232–isoleucine 252, leucine 278–phenylalanine 298, leucine 304–alanine 324, and valine 351–histidine 371. The segment at aspartate 375–glycine 406 is disordered. Over residues glycine 383–glycine 406 the composition is skewed to low complexity.

This sequence belongs to the ATPase A chain family. In terms of assembly, F-type ATPases have 2 components, CF(1) - the catalytic core - and CF(0) - the membrane proton channel. CF(1) has five subunits: alpha(3), beta(3), gamma(1), delta(1), epsilon(1). CF(0) has three main subunits: a(1), b(2) and c(9-12). The alpha and beta chains form an alternating ring which encloses part of the gamma chain. CF(1) is attached to CF(0) by a central stalk formed by the gamma and epsilon chains, while a peripheral stalk is formed by the delta and b chains.

Its subcellular location is the cell inner membrane. Key component of the proton channel; it plays a direct role in the translocation of protons across the membrane. This Anaeromyxobacter sp. (strain Fw109-5) protein is ATP synthase subunit a.